We begin with the raw amino-acid sequence, 684 residues long: Cleavage and polyadenylation specificity factor subunit 3 (684 aa).

Residue serine 2 is modified to N-acetylserine. 6 residues coordinate Zn(2+): histidine 71, histidine 73, aspartate 75, histidine 76, histidine 158, and aspartate 179. Residue histidine 396 is the Proton donor of the active site. Histidine 418 serves as a coordination point for Zn(2+). Residues lysine 462, lysine 465, and lysine 545 each participate in a glycyl lysine isopeptide (Lys-Gly) (interchain with G-Cter in SUMO) cross-link. Residue serine 659 is modified to Phosphoserine. At threonine 681 the chain carries Phosphothreonine.

Belongs to the metallo-beta-lactamase superfamily. RNA-metabolizing metallo-beta-lactamase-like family. CPSF3 subfamily. Component of the cleavage and polyadenylation specificity factor (CPSF) complex, composed of CPSF1, CPSF2, CPSF3, CPSF4 and FIP1L1. Interacts with CPSF2, CSTF2 and SYMPK. Interacts with TUT1; the interaction is direct and mediates the recruitment of the CPSF complex on the 3'UTR of pre-mRNAs. Interacts with WDR33. Interacts with ZC3H3. Zn(2+) is required as a cofactor. Sumoylated on Lys-462, Lys-465 and Lys-545, preferentially by SUMO3.

The protein localises to the nucleus. Functionally, component of the cleavage and polyadenylation specificity factor (CPSF) complex that plays a key role in pre-mRNA 3'-end formation, recognizing the AAUAAA signal sequence and interacting with poly(A) polymerase and other factors to bring about cleavage and poly(A) addition. Has endonuclease activity, and functions as an mRNA 3'-end-processing endonuclease. Also involved in the histone 3'-end pre-mRNA processing. U7 snRNP-dependent protein that induces both the 3'-endoribonucleolytic cleavage of histone pre-mRNAs and acts as a 5' to 3' exonuclease for degrading the subsequent downstream cleavage product (DCP) of mature histone mRNAs. Cleavage occurs after the 5'-ACCCA-3' sequence in the histone pre-mRNA leaving a 3'hydroxyl group on the upstream fragment containing the stem loop (SL) and 5' phosphate on the downstream cleavage product (DCP) starting with CU nucleotides. The U7-dependent 5' to 3' exonuclease activity is processive and degrades the DCP RNA substrate even after complete removal of the U7-binding site. Binds to the downstream cleavage product (DCP) of histone pre-mRNAs and the cleaved DCP RNA substrate in a U7 snRNP dependent manner. Required for entering/progressing through S-phase of the cell cycle. Required for the selective processing of microRNAs (miRNAs) during embryonic stem cell differentiation via its interaction with ISY1. Required for the biogenesis of all miRNAs from the pri-miR-17-92 primary transcript except miR-92a. Only required for the biogenesis of miR-290 and miR-96 from the pri-miR-290-295 and pri-miR-96-183 primary transcripts, respectively. The polypeptide is Cleavage and polyadenylation specificity factor subunit 3 (CPSF3) (Homo sapiens (Human)).